The following is a 452-amino-acid chain: Phosphoglucosamine mutase (452 aa).

S101 serves as the catalytic Phosphoserine intermediate. Positions 101, 241, 243, and 245 each coordinate Mg(2+). At S101 the chain carries Phosphoserine.

Belongs to the phosphohexose mutase family. It depends on Mg(2+) as a cofactor. Post-translationally, activated by phosphorylation.

It catalyses the reaction alpha-D-glucosamine 1-phosphate = D-glucosamine 6-phosphate. In terms of biological role, catalyzes the conversion of glucosamine-6-phosphate to glucosamine-1-phosphate. This is Phosphoglucosamine mutase from Lactococcus lactis subsp. cremoris (strain SK11).